The sequence spans 343 residues: Olfactory receptor 6K6 (343 aa).

At 1 to 53 (MKQYSVGNQHSNYRSLLFPFLCSQMTQLTASGNQTMVTEFLFSMFPHAHRGGL) the chain is on the extracellular side. N-linked (GlcNAc...) asparagine glycosylation is present at N33. A helical membrane pass occupies residues 54 to 74 (LFFIPLLLIYGFILTGNLIMF). Over 75–82 (IVIQVGMA) the chain is Cytoplasmic. The helical transmembrane segment at 83–103 (LHTPLYFFISVLSFLEICYTT) threads the bilayer. The Extracellular portion of the chain corresponds to 104–127 (TTIPKMLSCLISEQKSISVAGCLL). A disulfide bond links C125 and C217. Residues 128–148 (QMYFFHSLGITESCVLTAMAI) traverse the membrane as a helical segment. Residues 149-167 (DRYIAICNPLRYPTIMIPK) lie on the Cytoplasmic side of the membrane. A helical transmembrane segment spans residues 168–188 (LCIQLTVGSCFCGFLLVLPEI). Residues 189 to 224 (AWISTLPFCGSNQIHQIFCDFTPVLSLACTDTFLVV) are Extracellular-facing. The helical transmembrane segment at 225 to 244 (IVDAIHAAEIVASFLVIALS) threads the bilayer. Over 245–264 (YIRIIIVILGMHSAEGHHKA) the chain is Cytoplasmic. A helical transmembrane segment spans residues 265 to 285 (FSTCAAHLAVFLLFFGSVAVM). Residues 286–298 (YLRFSATYSVFWD) are Extracellular-facing. A helical transmembrane segment spans residues 299 to 319 (TAIAVTFVILAPFFNPIIYSL). The Cytoplasmic portion of the chain corresponds to 320–343 (KNKDMKEAIGRLFHYQKRAGWAGK).

The protein belongs to the G-protein coupled receptor 1 family.

It is found in the cell membrane. Its function is as follows. Odorant receptor. In Homo sapiens (Human), this protein is Olfactory receptor 6K6 (OR6K6).